The primary structure comprises 652 residues: Threonine--tRNA ligase (652 aa).

The region spanning 1-61 (MIKLKLPDGS…DRDAEVEIVT (61 aa)) is the TGS domain. The catalytic stretch occupies residues 243-548 (DHRKIGREMD…LIENYEGRFP (306 aa)). The Zn(2+) site is built by C348, H399, and H525.

It belongs to the class-II aminoacyl-tRNA synthetase family. In terms of assembly, homodimer. Requires Zn(2+) as cofactor.

It is found in the cytoplasm. The enzyme catalyses tRNA(Thr) + L-threonine + ATP = L-threonyl-tRNA(Thr) + AMP + diphosphate + H(+). In terms of biological role, catalyzes the attachment of threonine to tRNA(Thr) in a two-step reaction: L-threonine is first activated by ATP to form Thr-AMP and then transferred to the acceptor end of tRNA(Thr). Also edits incorrectly charged L-seryl-tRNA(Thr). In Parvibaculum lavamentivorans (strain DS-1 / DSM 13023 / NCIMB 13966), this protein is Threonine--tRNA ligase.